A 297-amino-acid chain; its full sequence is Inactive beta selinene synthase (297 aa).

The protein belongs to the terpene synthase family. In terms of assembly, monomer.

It localises to the cytoplasm. Its function is as follows. Inactive selinene synthase. In Zea mays (Maize), this protein is Inactive beta selinene synthase.